Here is a 223-residue protein sequence, read N- to C-terminus: Deoxyribose-phosphate aldolase (223 aa).

Aspartate 91 (proton donor/acceptor) is an active-site residue. Lysine 153 acts as the Schiff-base intermediate with acetaldehyde in catalysis. The active-site Proton donor/acceptor is lysine 182.

This sequence belongs to the DeoC/FbaB aldolase family. DeoC type 1 subfamily.

The protein resides in the cytoplasm. The catalysed reaction is 2-deoxy-D-ribose 5-phosphate = D-glyceraldehyde 3-phosphate + acetaldehyde. The protein operates within carbohydrate degradation; 2-deoxy-D-ribose 1-phosphate degradation; D-glyceraldehyde 3-phosphate and acetaldehyde from 2-deoxy-alpha-D-ribose 1-phosphate: step 2/2. Its function is as follows. Catalyzes a reversible aldol reaction between acetaldehyde and D-glyceraldehyde 3-phosphate to generate 2-deoxy-D-ribose 5-phosphate. This chain is Deoxyribose-phosphate aldolase, found in Yersinia pseudotuberculosis serotype O:1b (strain IP 31758).